A 199-amino-acid chain; its full sequence is Transcriptional regulatory protein EntR (199 aa).

The Response regulatory domain occupies 3–124 (KILVIDRCHF…TLSHTIQEAL (122 aa)). At aspartate 8 the chain carries 4-aspartylphosphate. The region spanning 133 to 198 (PKNATPLLTP…SPFLSLPGKG (66 aa)) is the HTH luxR-type domain. The H-T-H motif DNA-binding region spans 157–176 (NNAIAAALSIHGKTVYTYKR).

Its function is as follows. May serve to repress the entericidin locus in C.freundii. This is Transcriptional regulatory protein EntR (ecnR) from Citrobacter freundii.